Consider the following 282-residue polypeptide: Structure-specific endonuclease subunit slx1 (282 aa).

One can recognise a GIY-YIG domain in the interval Gly7–Lys97. The segment at Cys191–Cys243 adopts an SLX1-type zinc-finger fold.

It belongs to the SLX1 family. Forms a heterodimer with slx4. The cofactor is a divalent metal cation.

Its subcellular location is the nucleus. Its function is as follows. Catalytic subunit of the slx1-slx4 structure-specific endonuclease that resolves DNA secondary structures generated during DNA repair and recombination. Has endonuclease activity towards branched DNA substrates, introducing single-strand cuts in duplex DNA close to junctions with ss-DNA. The protein is Structure-specific endonuclease subunit slx1 (slx1a) of Xenopus laevis (African clawed frog).